Here is a 149-residue protein sequence, read N- to C-terminus: CyanoQ (149 aa).

An N-terminal signal peptide occupies residues 1 to 21 (MSRLRSLLSLILVLVTTVLVS). Cysteine 22 is lipidated: N-palmitoyl cysteine. Cysteine 22 carries S-diacylglycerol cysteine lipidation.

This sequence belongs to the PsbQ family. CyanoQ subfamily. As to quaternary structure, PSII is composed of 1 copy each of membrane proteins PsbA, PsbB, PsbC, PsbD, PsbE, PsbF, PsbH, PsbI, PsbJ, PsbK, PsbL, PsbM, PsbT, PsbX, PsbY, PsbZ, Psb30/Ycf12, peripheral proteins PsbO, CyanoQ (PsbQ), PsbU, PsbV and a large number of cofactors. It forms dimeric complexes. Pull-down experiments with His-tagged PsbQ pull down dimeric, but not monomeric, PSII. In terms of processing, the N-terminus is blocked. Upon expression in E.coli the N-terminus is modified with a diacylglycerol and an acyl group bound to two palmitates and one palmitoleate.

Its subcellular location is the cellular thylakoid membrane. Its function is as follows. One of the extrinsic, lumenal subunits of photosystem II (PSII), which stabilize and protect the oxygen-evolving complex. PSII is a light-driven water plastoquinone oxidoreductase, using light energy to abstract electrons from H(2)O, generating a proton gradient subsequently used for ATP formation. Plays a role in the stability of the oxygen-evolving center on the luminal side of PSII. Required for optimal photoautotrophic growth in the absence of Ca(2+) or Cl(-), functions in optimizing PSII water oxidation/O(2) evolving activity. Requires PsbO to bind to PSII. The protein is CyanoQ of Synechocystis sp. (strain ATCC 27184 / PCC 6803 / Kazusa).